The following is a 134-amino-acid chain: Orexigenic neuropeptide QRFP (134 aa).

The signal sequence occupies residues 1 to 18; sequence MRSPYSLPYLLFLPLGAC. A propeptide spanning residues 19 to 88 is cleaved from the precursor; that stretch reads FPVLDTEEPV…RAGFQLRLGR (70 aa). The residue at position 131 (F131) is a Phenylalanine amide.

It belongs to the RFamide neuropeptide family. In terms of assembly, ligand for the G-protein coupled receptor QRFPR/GPR103. In terms of tissue distribution, expressed in the hypothalamus.

It is found in the secreted. Functionally, stimulates feeding behavior, metabolic rate and locomotor activity and increases blood pressure. May have orexigenic activity. May promote aldosterone secretion by the adrenal gland. The sequence is that of Orexigenic neuropeptide QRFP from Bos taurus (Bovine).